Reading from the N-terminus, the 211-residue chain is MTSRRTRLRLIERLRKNGIQNEAVLEAMTEIPRHIFVDEALAHRAYEDTALPIGHSQTISQPYIVARMTELLCSGWKPKRVLEVGAGSGYQTAILARLSTQVYTVERIAPLLEKAKLRFKALKLNNVSAKLSDGRWGWPEQGPFDAIMVTAAPEQTPSELLEQLADGGRLVIPVGSGSEQMLKVYKRQGAEIEESSLEQVRFVPLLGGVVR.

S60 is a catalytic residue.

It belongs to the methyltransferase superfamily. L-isoaspartyl/D-aspartyl protein methyltransferase family.

The protein localises to the cytoplasm. It catalyses the reaction [protein]-L-isoaspartate + S-adenosyl-L-methionine = [protein]-L-isoaspartate alpha-methyl ester + S-adenosyl-L-homocysteine. Its function is as follows. Catalyzes the methyl esterification of L-isoaspartyl residues in peptides and proteins that result from spontaneous decomposition of normal L-aspartyl and L-asparaginyl residues. It plays a role in the repair and/or degradation of damaged proteins. This chain is Protein-L-isoaspartate O-methyltransferase, found in Hahella chejuensis (strain KCTC 2396).